Here is a 158-residue protein sequence, read N- to C-terminus: uncharacterized protein (158 aa).

4 helical membrane-spanning segments follow: residues 42 to 62, 71 to 91, 102 to 122, and 130 to 150; these read FHFAVIVITMLAYLSAFGFLY, WIFIGFLGSMVINAIFPHLIA, LLTGLLLNIPVNSLVIYQMFL, and ELIISTLVVGIILLALIPLLF.

It is found in the cell membrane. This is an uncharacterized protein from Bacillus subtilis (strain 168).